Here is a 681-residue protein sequence, read N- to C-terminus: DNA ligase (681 aa).

NAD(+) contacts are provided by residues 34 to 38 (DEEYD), 83 to 84 (SL), and E112. The active-site N6-AMP-lysine intermediate is the K114. R135, E169, K285, and K309 together coordinate NAD(+). Residues C403, C406, C422, and C427 each coordinate Zn(2+). One can recognise a BRCT domain in the interval 584–673 (TTSNILDGLT…GVELKESWKK (90 aa)).

Belongs to the NAD-dependent DNA ligase family. LigA subfamily. Mg(2+) serves as cofactor. Requires Mn(2+) as cofactor.

The enzyme catalyses NAD(+) + (deoxyribonucleotide)n-3'-hydroxyl + 5'-phospho-(deoxyribonucleotide)m = (deoxyribonucleotide)n+m + AMP + beta-nicotinamide D-nucleotide.. Its function is as follows. DNA ligase that catalyzes the formation of phosphodiester linkages between 5'-phosphoryl and 3'-hydroxyl groups in double-stranded DNA using NAD as a coenzyme and as the energy source for the reaction. It is essential for DNA replication and repair of damaged DNA. This is DNA ligase from Fervidobacterium nodosum (strain ATCC 35602 / DSM 5306 / Rt17-B1).